Here is a 226-residue protein sequence, read N- to C-terminus: High affinity heme transporter (226 aa).

Residues 1–20 form the signal peptide; sequence MISLKIYFVLIFLFLKGINS. Residues 72 to 101 form a heme binding region; it reads CDTTILSETNNVTGSCYVANCANDTVLEIC. Ser199 carries GPI-anchor amidated serine lipidation. A propeptide spans 200–226 (removed in mature form); sequence SASSTIFKPSYFISCLLSVGLYLVLNF.

It is found in the cell membrane. It localises to the vacuole membrane. Its function is as follows. High affinity heme transporter involved in the assimilation of exogenous heme during conditions of low cellular iron. The protein is High affinity heme transporter of Schizosaccharomyces pombe (strain 972 / ATCC 24843) (Fission yeast).